A 266-amino-acid polypeptide reads, in one-letter code: N-formylglutamate deformylase (266 aa).

This sequence belongs to the N-formylglutamate deformylase family. Monomer.

The enzyme catalyses N-formyl-L-glutamate + H2O = formate + L-glutamate. It functions in the pathway amino-acid degradation; L-histidine degradation into L-glutamate; L-glutamate from N-formimidoyl-L-glutamate (deiminase route): step 2/2. In terms of biological role, catalyzes the hydrolysis of N-formyl-L-glutamate to formate and L-glutamate. Shows weak activity with N-formyl-L-glutamine. The protein is N-formylglutamate deformylase of Pseudomonas aeruginosa (strain ATCC 15692 / DSM 22644 / CIP 104116 / JCM 14847 / LMG 12228 / 1C / PRS 101 / PAO1).